The sequence spans 305 residues: Undecaprenyl-diphosphatase (305 aa).

A run of 8 helical transmembrane segments spans residues 18–38 (GVTE…PALV), 55–75 (YLAF…VFFW), 103–123 (WLIV…EQLF), 130–150 (PVPA…GEVL), 187–207 (GVLI…RSGI), 225–245 (FSFL…IPEL), 246–266 (FGPL…ASFV), and 284–304 (LTPF…WLAL).

The protein belongs to the UppP family.

It localises to the cell membrane. The catalysed reaction is di-trans,octa-cis-undecaprenyl diphosphate + H2O = di-trans,octa-cis-undecaprenyl phosphate + phosphate + H(+). Its function is as follows. Catalyzes the dephosphorylation of undecaprenyl diphosphate (UPP). Confers resistance to bacitracin. This is Undecaprenyl-diphosphatase from Mycolicibacterium paratuberculosis (strain ATCC BAA-968 / K-10) (Mycobacterium paratuberculosis).